A 137-amino-acid polypeptide reads, in one-letter code: Basic phospholipase A2 homolog MT1 (137 aa).

The first 16 residues, 1–16, serve as a signal peptide directing secretion; that stretch reads MRTLWIVALLLVGVEG. Intrachain disulfides connect C42–C131, C44–C60, C59–C111, C65–C137, C66–C104, C73–C97, and C91–C102. The segment at 121-133 is important for membrane-damaging activities in eukaryotes and bacteria; heparin-binding; that stretch reads KKYKAYFKFKCKK.

This sequence belongs to the phospholipase A2 family. Group II subfamily. K49 sub-subfamily. In terms of assembly, binds to heparin. Expressed by the venom gland.

The protein resides in the secreted. Heparin and wedelolactone inhibit the myotoxic activity. The PLA2 inhibitor, para-bromophenacyl bromide (BPB), inhibits the myotoxic activity. Functionally, snake venom phospholipase A2 homolog that lacks enzymatic activity. Has myotoxic activities. A model of myotoxic mechanism has been proposed: an apo Lys49-PLA2 is activated by the entrance of a hydrophobic molecule (e.g. fatty acid) at the hydrophobic channel of the protein leading to a reorientation of a monomer. This reorientation causes a transition between 'inactive' to 'active' states, causing alignment of C-terminal and membrane-docking sites (MDoS) side-by-side and putting the membrane-disruption sites (MDiS) in the same plane, exposed to solvent and in a symmetric position for both monomers. The MDoS region stabilizes the toxin on membrane by the interaction of charged residues with phospholipid head groups. Subsequently, the MDiS region destabilizes the membrane with penetration of hydrophobic residues. This insertion causes a disorganization of the membrane, allowing an uncontrolled influx of ions (i.e. calcium and sodium), and eventually triggering irreversible intracellular alterations and cell death. The sequence is that of Basic phospholipase A2 homolog MT1 from Agkistrodon contortrix laticinctus (Broad-banded copperhead).